Consider the following 599-residue polypeptide: Sulfite reductase [NADPH] flavoprotein alpha-component (599 aa).

The region spanning 64–202 (VTLISASQTG…AASEWRACVV (139 aa)) is the Flavodoxin-like domain. Residues 70–75 (SQTGNA), 117–120 (STQG), and 153–162 (LGDTSYEFFC) contribute to the FMN site. The FAD-binding FR-type domain occupies 234 to 448 (DAPLTATLSV…IEHNDNFRLP (215 aa)). Residues T322, A356, 386–389 (RLYS), 404–406 (TVG), Y410, and 419–422 (GGAS) contribute to the FAD site. NADP(+)-binding positions include 519–520 (SR), 525–529 (KIYVQ), and D561. FAD is bound at residue Y599.

This sequence belongs to the NADPH-dependent sulphite reductase flavoprotein subunit CysJ family. The protein in the N-terminal section; belongs to the flavodoxin family. It in the C-terminal section; belongs to the flavoprotein pyridine nucleotide cytochrome reductase family. Alpha(8)-beta(8). The alpha component is a flavoprotein, the beta component is a hemoprotein. The cofactor is FAD. FMN is required as a cofactor.

It catalyses the reaction hydrogen sulfide + 3 NADP(+) + 3 H2O = sulfite + 3 NADPH + 4 H(+). It participates in sulfur metabolism; hydrogen sulfide biosynthesis; hydrogen sulfide from sulfite (NADPH route): step 1/1. In terms of biological role, component of the sulfite reductase complex that catalyzes the 6-electron reduction of sulfite to sulfide. This is one of several activities required for the biosynthesis of L-cysteine from sulfate. The flavoprotein component catalyzes the electron flow from NADPH -&gt; FAD -&gt; FMN to the hemoprotein component. This is Sulfite reductase [NADPH] flavoprotein alpha-component from Salmonella typhi.